Reading from the N-terminus, the 356-residue chain is MSERRIIHVDMDYFFAQVEMRDNPKLKGKPVIVGGKASGRGVVSTASYEARQYGVHSAMPTAQAHKLCPNGYYVTPRFEAYKTASEKIMNIFKSYTEVVEPLSLDEAYLDITHLVRPDLPASRIAQYIRRDIYEATMLTSSAGVSYNKFLAKLASGMNKPNGLTVIDYRNVHDILMGLDIGDFPGVGKASKQKMHQEAIYTGQDLYNQSERDLIRLFGKRGHGLYNKARGIDHNPVKPTRIRKSVGTERTFATDMNDDEEILQKIWELSNKTAERLAKLQKSGKTVTVKIKTFKFESLSKQRSLRDPVRSETDIYNIAYDLYTELKNPETPIRLVGVTVGNLEKATYENMTIYDYI.

The UmuC domain occupies 6–187; sequence IIHVDMDYFF…LDIGDFPGVG (182 aa). 2 residues coordinate Mg(2+): Asp10 and Asp105. The active site involves Glu106.

The protein belongs to the DNA polymerase type-Y family. Monomer. Mg(2+) serves as cofactor.

It localises to the cytoplasm. It catalyses the reaction DNA(n) + a 2'-deoxyribonucleoside 5'-triphosphate = DNA(n+1) + diphosphate. Its function is as follows. Poorly processive, error-prone DNA polymerase involved in untargeted mutagenesis. Copies undamaged DNA at stalled replication forks, which arise in vivo from mismatched or misaligned primer ends. These misaligned primers can be extended by PolIV. Exhibits no 3'-5' exonuclease (proofreading) activity. May be involved in translesional synthesis, in conjunction with the beta clamp from PolIII. This is DNA polymerase IV from Staphylococcus saprophyticus subsp. saprophyticus (strain ATCC 15305 / DSM 20229 / NCIMB 8711 / NCTC 7292 / S-41).